The primary structure comprises 137 residues: Large ribosomal subunit protein uL16 (137 aa).

The protein belongs to the universal ribosomal protein uL16 family. As to quaternary structure, part of the 50S ribosomal subunit.

In terms of biological role, binds 23S rRNA and is also seen to make contacts with the A and possibly P site tRNAs. This chain is Large ribosomal subunit protein uL16, found in Rhodopseudomonas palustris (strain BisA53).